Here is an 813-residue protein sequence, read N- to C-terminus: LPS-assembly protein LptD (813 aa).

Residues 1 to 29 are disordered; sequence MTEQRRSPNNRALPSPAPTSVPARARRAG. Residues 1-52 form the signal peptide; the sequence is MTEQRRSPNNRALPSPAPTSVPARARRAGGLHAGALRPLVLAMASLSAGAHA.

This sequence belongs to the LptD family. In terms of assembly, component of the lipopolysaccharide transport and assembly complex. Interacts with LptE and LptA.

The protein resides in the cell outer membrane. Functionally, together with LptE, is involved in the assembly of lipopolysaccharide (LPS) at the surface of the outer membrane. The polypeptide is LPS-assembly protein LptD (Cupriavidus necator (strain ATCC 17699 / DSM 428 / KCTC 22496 / NCIMB 10442 / H16 / Stanier 337) (Ralstonia eutropha)).